Consider the following 60-residue polypeptide: MANKLKITLTKSTIGALPKHKLTVSALGLGKLHSTNEVPDNVAIRGMLKQVKHLVMVEEI.

Belongs to the universal ribosomal protein uL30 family. As to quaternary structure, part of the 50S ribosomal subunit.

This chain is Large ribosomal subunit protein uL30, found in Lachnoclostridium phytofermentans (strain ATCC 700394 / DSM 18823 / ISDg) (Clostridium phytofermentans).